The sequence spans 298 residues: ATP synthase gamma chain (298 aa).

The protein belongs to the ATPase gamma chain family. As to quaternary structure, F-type ATPases have 2 components, CF(1) - the catalytic core - and CF(0) - the membrane proton channel. CF(1) has five subunits: alpha(3), beta(3), gamma(1), delta(1), epsilon(1). CF(0) has three main subunits: a, b and c.

Its subcellular location is the cell inner membrane. In terms of biological role, produces ATP from ADP in the presence of a proton gradient across the membrane. The gamma chain is believed to be important in regulating ATPase activity and the flow of protons through the CF(0) complex. In Bacteroides thetaiotaomicron (strain ATCC 29148 / DSM 2079 / JCM 5827 / CCUG 10774 / NCTC 10582 / VPI-5482 / E50), this protein is ATP synthase gamma chain.